Consider the following 232-residue polypeptide: Large ribosomal subunit protein uL1 (232 aa).

The protein belongs to the universal ribosomal protein uL1 family. As to quaternary structure, part of the 50S ribosomal subunit.

Functionally, binds directly to 23S rRNA. The L1 stalk is quite mobile in the ribosome, and is involved in E site tRNA release. Its function is as follows. Protein L1 is also a translational repressor protein, it controls the translation of the L11 operon by binding to its mRNA. The protein is Large ribosomal subunit protein uL1 of Bacillus pumilus (strain SAFR-032).